We begin with the raw amino-acid sequence, 226 residues long: Beta-casein (226 aa).

An N-terminal signal peptide occupies residues 1-15 (MKVLILACLVALALA). Position 18 is a phosphothreonine; in form 5-P (Thr18). Ser21 carries the phosphoserine; in form 4-P and form 5-P modification. At Ser23 the chain carries Phosphoserine; in form 3-P, form 4-P and form 5-P. Ser24 and Ser25 each carry phosphoserine; in form 1-P, form 2-P, form 3-P, form 4-P and form 5-P.

It belongs to the beta-casein family. Post-translationally, form 1-P is phosphorylated once; half of the molecules are phosphorylated on Ser-24, half on Ser-25. Mammary gland specific. Secreted in milk.

It localises to the secreted. Important role in determination of the surface properties of the casein micelles. This Homo sapiens (Human) protein is Beta-casein (CSN2).